Consider the following 195-residue polypeptide: uncharacterized protein (195 aa).

A disordered region spans residues 1–35 (MASSSSAALRPFGTARLTPGRQTGRQTQQQISAPE). Over residues 20-30 (GRQTGRQTQQQ) the composition is skewed to low complexity. The MSP domain occupies 76–184 (GVTVIPRVAR…PASINMALEA (109 aa)).

This is an uncharacterized protein from Caenorhabditis elegans.